We begin with the raw amino-acid sequence, 846 residues long: ATR-interacting protein mus304 (846 aa).

Disordered regions lie at residues 20–40 (DVSV…FDGI), 90–109 (QGST…QKKP), and 135–162 (EPQK…KTTT). Residues 144–162 (TSTSRITTSSISVQQKTTT) show a composition bias toward low complexity. Coiled-coil stretches lie at residues 168–240 (ATQS…LADE) and 327–359 (EYSE…LQAK). Residues 504–510 (EELLFDL) carry the EEXXXDL motif motif. Residues 651 to 681 (GAVQGSVSNGSTSASVSNPNQNSNSSTTQRG) form a disordered region. Low complexity predominate over residues 655–676 (GSVSNGSTSASVSNPNQNSNSS).

Belongs to the ATRIP family. Interacts with ATR/mei-41. Highly expressed in the oocyte and nurse cells from stage 5 onward and in embryos prior to during nuclear division 14. Then, it decreases to background levels during interphase 14. Weakly or not expressed in stage embryos and imaginal disks.

The protein resides in the cytoplasm. In terms of biological role, DNA damage checkpoint protein required for chromosome break repair and for genomic stability during development. This Drosophila melanogaster (Fruit fly) protein is ATR-interacting protein mus304 (mus304).